A 444-amino-acid chain; its full sequence is MTDAVWNERRLGEDKQRRNDHRSPYQRDRARILHSAAFRRLQAKTQVLGVGMNDFYRTRLTHSLEVSQIGTGICAQLKQKQPQHNPLLDSMSLIESLCLAHDIGHPPFGHGGEVALNYMMRKHGGFEGNGQTFRILTRLEPYTEHFGMNLCRRTLLGILKYPAPYTNLCVGTPEESVDDFRQLKPSKWPPVKGIFDDDREILDWVLAPLSQQDRAKFLSSHVVKDIKHKRTRFKSLDCSIMELADDIAYAVHDLEDAIVMGIVSEQQWHTDVSLPLSQSNDPWLKNEFATISQRLFSAKHHLRKDAIGTLVNGFVTAIAITEVDGFEEPLLRYNAALEPAFHEALSILKQFVYKYVIRKPEIQMLEYKGQQIVMELFEAFISDPERLLPLNTQERWLAHERLGENSHRVIADYISGMTDGFAARLHQHLFSAKSHSMMDFNSDF.

The disordered stretch occupies residues 1–28 (MTDAVWNERRLGEDKQRRNDHRSPYQRD). The region spanning 59 to 250 (RLTHSLEVSQ…MELADDIAYA (192 aa)) is the HD domain.

The protein belongs to the dGTPase family. Type 2 subfamily.

The protein is Deoxyguanosinetriphosphate triphosphohydrolase-like protein of Shewanella pealeana (strain ATCC 700345 / ANG-SQ1).